We begin with the raw amino-acid sequence, 284 residues long: D-tagatose-1,6-bisphosphate aldolase subunit GatY (284 aa).

The active-site Proton donor is D82. Positions 83 and 180 each coordinate Zn(2+). Dihydroxyacetone phosphate is bound at residue G181. H208 is a binding site for Zn(2+). Dihydroxyacetone phosphate contacts are provided by residues 209–211 (GAS) and 230–233 (NVAT).

The protein belongs to the class II fructose-bisphosphate aldolase family. TagBP aldolase GatY subfamily. Forms a complex with GatZ. Zn(2+) serves as cofactor.

It carries out the reaction D-tagatofuranose 1,6-bisphosphate = D-glyceraldehyde 3-phosphate + dihydroxyacetone phosphate. It participates in carbohydrate metabolism; D-tagatose 6-phosphate degradation; D-glyceraldehyde 3-phosphate and glycerone phosphate from D-tagatose 6-phosphate: step 2/2. Catalytic subunit of the tagatose-1,6-bisphosphate aldolase GatYZ, which catalyzes the reversible aldol condensation of dihydroxyacetone phosphate (DHAP or glycerone-phosphate) with glyceraldehyde 3-phosphate (G3P) to produce tagatose 1,6-bisphosphate (TBP). Requires GatZ subunit for full activity and stability. Is involved in the catabolism of galactitol. The chain is D-tagatose-1,6-bisphosphate aldolase subunit GatY from Shigella boydii serotype 4 (strain Sb227).